The sequence spans 439 residues: Exodeoxyribonuclease 7 large subunit (439 aa).

This sequence belongs to the XseA family. As to quaternary structure, heterooligomer composed of large and small subunits.

It localises to the cytoplasm. The catalysed reaction is Exonucleolytic cleavage in either 5'- to 3'- or 3'- to 5'-direction to yield nucleoside 5'-phosphates.. Functionally, bidirectionally degrades single-stranded DNA into large acid-insoluble oligonucleotides, which are then degraded further into small acid-soluble oligonucleotides. In Haemophilus influenzae (strain ATCC 51907 / DSM 11121 / KW20 / Rd), this protein is Exodeoxyribonuclease 7 large subunit.